The sequence spans 106 residues: uncharacterized protein (106 aa).

This is an uncharacterized protein from Escherichia coli O157:H7.